Reading from the N-terminus, the 294-residue chain is Bifunctional protein FolD (294 aa).

Residues 166–168, Ser191, and Ile232 each bind NADP(+); that span reads GRS.

It belongs to the tetrahydrofolate dehydrogenase/cyclohydrolase family. As to quaternary structure, homodimer.

The catalysed reaction is (6R)-5,10-methylene-5,6,7,8-tetrahydrofolate + NADP(+) = (6R)-5,10-methenyltetrahydrofolate + NADPH. The enzyme catalyses (6R)-5,10-methenyltetrahydrofolate + H2O = (6R)-10-formyltetrahydrofolate + H(+). It participates in one-carbon metabolism; tetrahydrofolate interconversion. Functionally, catalyzes the oxidation of 5,10-methylenetetrahydrofolate to 5,10-methenyltetrahydrofolate and then the hydrolysis of 5,10-methenyltetrahydrofolate to 10-formyltetrahydrofolate. This is Bifunctional protein FolD from Nitrobacter hamburgensis (strain DSM 10229 / NCIMB 13809 / X14).